A 302-amino-acid polypeptide reads, in one-letter code: Ubiquinone biosynthesis protein COQ4, mitochondrial (302 aa).

A mitochondrion-targeting transit peptide spans Met-1 to Gln-19. 4 residues coordinate Zn(2+): His-176, Asp-177, His-180, and Glu-192. Positions Pro-268–Ala-282 are enriched in basic and acidic residues. The segment at Pro-268–Leu-302 is disordered.

The protein belongs to the COQ4 family. Component of a multi-subunit COQ enzyme complex, composed of at least COQ3, COQ4, COQ5, COQ6, COQ7 and COQ9. It depends on Zn(2+) as a cofactor.

The protein localises to the mitochondrion inner membrane. The catalysed reaction is a 4-hydroxy-3-methoxy-5-(all-trans-polyprenyl)benzoate + H(+) = a 2-methoxy-6-(all-trans-polyprenyl)phenol + CO2. It participates in cofactor biosynthesis; ubiquinone biosynthesis. Lyase that catalyzes the C1-decarboxylation of 4-hydroxy-3-methoxy-5-(all-trans-polyprenyl)benzoic acid into 2-methoxy-6-(all-trans-polyprenyl)phenol during ubiquinone biosynthesis. In Pyricularia oryzae (strain 70-15 / ATCC MYA-4617 / FGSC 8958) (Rice blast fungus), this protein is Ubiquinone biosynthesis protein COQ4, mitochondrial.